The following is a 337-amino-acid chain: Fructose-1,6-bisphosphatase class 1 (337 aa).

4 residues coordinate Mg(2+): Glu94, Asp116, Leu118, and Asp119. Substrate contacts are provided by residues 119-122 (DGSS), Asn210, and Lys276. Position 282 (Glu282) interacts with Mg(2+).

This sequence belongs to the FBPase class 1 family. As to quaternary structure, homotetramer. The cofactor is Mg(2+).

The protein resides in the cytoplasm. It carries out the reaction beta-D-fructose 1,6-bisphosphate + H2O = beta-D-fructose 6-phosphate + phosphate. Its pathway is carbohydrate biosynthesis; gluconeogenesis. In Burkholderia multivorans (strain ATCC 17616 / 249), this protein is Fructose-1,6-bisphosphatase class 1.